A 179-amino-acid chain; its full sequence is Large ribosomal subunit protein uL5 (179 aa).

This sequence belongs to the universal ribosomal protein uL5 family. Part of the 50S ribosomal subunit; part of the 5S rRNA/L5/L18/L25 subcomplex. Contacts the 5S rRNA and the P site tRNA. Forms a bridge to the 30S subunit in the 70S ribosome.

This is one of the proteins that bind and probably mediate the attachment of the 5S RNA into the large ribosomal subunit, where it forms part of the central protuberance. In the 70S ribosome it contacts protein S13 of the 30S subunit (bridge B1b), connecting the 2 subunits; this bridge is implicated in subunit movement. Contacts the P site tRNA; the 5S rRNA and some of its associated proteins might help stabilize positioning of ribosome-bound tRNAs. This Halothermothrix orenii (strain H 168 / OCM 544 / DSM 9562) protein is Large ribosomal subunit protein uL5.